The chain runs to 35 residues: Surfactant protein C (35 aa).

Residues cysteine 5 and cysteine 6 are each lipidated (S-palmitoyl cysteine).

The protein localises to the secreted. It is found in the extracellular space. Its subcellular location is the surface film. In terms of biological role, pulmonary surfactant associated proteins promote alveolar stability by lowering the surface tension at the air-liquid interface in the peripheral air spaces. This is Surfactant protein C (SFTPC) from Sus scrofa (Pig).